The following is a 785-amino-acid chain: Tripartite terminase subunit 1 (785 aa).

The segment at Cys197–His225 adopts a C3H1-type zinc-finger fold. 2 disordered regions span residues Gly433–Val452 and Gly457–Ala489. Position 696-703 (Phe696–Gly703) interacts with ATP.

It belongs to the herpesviridae TRM1 protein family. In terms of assembly, associates with TRM2 and TRM3 to form the tripartite terminase complex. Interacts with portal protein.

Its subcellular location is the host nucleus. Component of the molecular motor that translocates viral genomic DNA in empty capsid during DNA packaging. Forms a tripartite terminase complex together with TRM2 and TRM3 in the host cytoplasm. Once the complex reaches the host nucleus, it interacts with the capsid portal vertex. This portal forms a ring in which genomic DNA is translocated into the capsid. TRM1 carries an endonuclease activity that plays an important role for the cleavage of concatemeric viral DNA into unit length genomes. The chain is Tripartite terminase subunit 1 from Human herpesvirus 1 (strain 17) (HHV-1).